The following is a 258-amino-acid chain: UPF0246 protein ABO_1338 (258 aa).

It belongs to the UPF0246 family.

This Alcanivorax borkumensis (strain ATCC 700651 / DSM 11573 / NCIMB 13689 / SK2) protein is UPF0246 protein ABO_1338.